The following is a 389-amino-acid chain: N-terminal EF-hand calcium-binding protein 2 (389 aa).

Residue R10 is modified to Omega-N-methylarginine. R42 carries the post-translational modification Asymmetric dimethylarginine. EF-hand domains follow at residues 63-98 and 99-132; these read GGTA…GVLN and EKEL…HMGD. Residues D76, N78, D80, K82, E87, D110, D112, T114, H116, and E121 each contribute to the Ca(2+) site. Residues 173–198 are a coiled coil; the sequence is LKETANQIQSLLSSVESAVEAIEEQT. An ABM domain is found at 289 to 377; it reads QLVRQEMAVC…LSQPEALSQI (89 aa).

As to quaternary structure, interacts (calcium-dependent) with ADORA2A and GRM5. As to expression, expressed in the iris, in the ciliary margin of the retina and in the inner portion of the neural retina. Expressed in the spinal dorsal horn with especially strong expression in lamina IIi; found in excitory synaptic boutons (at protein level).

The protein resides in the cytoplasm. It is found in the cell projection. It localises to the dendrite. The protein localises to the axon. Its subcellular location is the cell membrane. Its function is as follows. May act as a signaling scaffold protein that senses intracellular calcium. Can modulate ligand-induced internalization of ADORA2A and coupling efficiency of mGluR5/GRM5; for both receptors may regulate signaling activity such as promoting MAPK1/3 (ERK1/2) activation. The sequence is that of N-terminal EF-hand calcium-binding protein 2 (Necab2) from Mus musculus (Mouse).